The primary structure comprises 71 residues: Sec-independent protein translocase protein TatA (71 aa).

A helical transmembrane segment spans residues 1–21 (MGSFSLLHWLVVLVIVLLVFG). The tract at residues 43-71 (LHEDDKPTDQLGSTSQSTASGPQQDHGKH) is disordered. Residues 52 to 65 (QLGSTSQSTASGPQ) show a composition bias toward polar residues.

This sequence belongs to the TatA/E family. As to quaternary structure, the Tat system comprises two distinct complexes: a TatABC complex, containing multiple copies of TatA, TatB and TatC subunits, and a separate TatA complex, containing only TatA subunits. Substrates initially bind to the TatABC complex, which probably triggers association of the separate TatA complex to form the active translocon.

It is found in the cell inner membrane. Part of the twin-arginine translocation (Tat) system that transports large folded proteins containing a characteristic twin-arginine motif in their signal peptide across membranes. TatA could form the protein-conducting channel of the Tat system. This is Sec-independent protein translocase protein TatA from Xylella fastidiosa (strain M12).